Reading from the N-terminus, the 155-residue chain is Interferon gamma (155 aa).

A signal peptide spans 1-22 (MNATHCILALQLFLMAVSGCYC). 2 N-linked (GlcNAc...) asparagine glycosylation sites follow: asparagine 38 and asparagine 90.

The protein belongs to the type II (or gamma) interferon family. In terms of assembly, homodimer. Interacts with IFNGR1 (via extracellular domain); this interaction promotes IFNGR1 dimerization. In terms of tissue distribution, released primarily from activated T lymphocytes.

Its subcellular location is the secreted. Type II interferon produced by immune cells such as T-cells and NK cells that plays crucial roles in antimicrobial, antiviral, and antitumor responses by activating effector immune cells and enhancing antigen presentation. Primarily signals through the JAK-STAT pathway after interaction with its receptor IFNGR1 to affect gene regulation. Upon IFNG binding, IFNGR1 intracellular domain opens out to allow association of downstream signaling components JAK2, JAK1 and STAT1, leading to STAT1 activation, nuclear translocation and transcription of IFNG-regulated genes. Many of the induced genes are transcription factors such as IRF1 that are able to further drive regulation of a next wave of transcription. Plays a role in class I antigen presentation pathway by inducing a replacement of catalytic proteasome subunits with immunoproteasome subunits. In turn, increases the quantity, quality, and repertoire of peptides for class I MHC loading. Increases the efficiency of peptide generation also by inducing the expression of activator PA28 that associates with the proteasome and alters its proteolytic cleavage preference. Up-regulates as well MHC II complexes on the cell surface by promoting expression of several key molecules such as cathepsins B/CTSB, H/CTSH, and L/CTSL. Participates in the regulation of hematopoietic stem cells during development and under homeostatic conditions by affecting their development, quiescence, and differentiation. The protein is Interferon gamma (Ifng) of Mus musculus (Mouse).